Here is a 90-residue protein sequence, read N- to C-terminus: Progonadoliberin-1 (90 aa).

A signal peptide spans 1-24; sequence MSRHVTVVLLLAIVLLLSSHMIHG. Pyrrolidone carboxylic acid is present on Gln-25. Gly-34 bears the Glycine amide mark.

The protein belongs to the GnRH family. In terms of tissue distribution, forebrain.

Its subcellular location is the secreted. Its function is as follows. Stimulates the secretion of gonadotropins. This Aquarana catesbeiana (American bullfrog) protein is Progonadoliberin-1 (gnrh1).